A 181-amino-acid chain; its full sequence is Inner membrane-spanning protein YciB (181 aa).

The next 5 membrane-spanning stretches (helical) occupy residues 8 to 28 (FPII…ATAA), 53 to 73 (ITLI…NAIF), 76 to 96 (WKPT…HFFG), 121 to 141 (LSWA…VYNF), and 149 to 169 (FKLF…AFYI).

The protein belongs to the YciB family.

The protein localises to the cell inner membrane. Its function is as follows. Plays a role in cell envelope biogenesis, maintenance of cell envelope integrity and membrane homeostasis. This is Inner membrane-spanning protein YciB from Coxiella burnetii (strain CbuK_Q154) (Coxiella burnetii (strain Q154)).